We begin with the raw amino-acid sequence, 182 residues long: Large ribosomal subunit protein eL15 (182 aa).

It belongs to the eukaryotic ribosomal protein eL15 family.

The protein is Large ribosomal subunit protein eL15 (rpl15e) of Methanothermobacter thermautotrophicus (strain ATCC 29096 / DSM 1053 / JCM 10044 / NBRC 100330 / Delta H) (Methanobacterium thermoautotrophicum).